Consider the following 256-residue polypeptide: 2,3,4,5-tetrahydropyridine-2,6-dicarboxylate N-acetyltransferase (256 aa).

Belongs to the transferase hexapeptide repeat family. DapH subfamily.

The catalysed reaction is (S)-2,3,4,5-tetrahydrodipicolinate + acetyl-CoA + H2O = L-2-acetamido-6-oxoheptanedioate + CoA. It participates in amino-acid biosynthesis; L-lysine biosynthesis via DAP pathway; LL-2,6-diaminopimelate from (S)-tetrahydrodipicolinate (acetylase route): step 1/3. Catalyzes the transfer of an acetyl group from acetyl-CoA to tetrahydrodipicolinate. The protein is 2,3,4,5-tetrahydropyridine-2,6-dicarboxylate N-acetyltransferase of Lactococcus lactis subsp. cremoris (strain MG1363).